The following is a 524-amino-acid chain: REH2-associated factor 1 (524 aa).

The N-terminal 22 residues, 1 to 22, are a transit peptide targeting the mitochondrion; the sequence is MRRWLVASMAPQLHQLLQPVRR. Residues 48–70 form a C2H2-type 1; atypical zinc finger; sequence ASCPACSRVVHMCDMLTHLITAH. Residues 121-147 form a C2H2-type 2; atypical zinc finger; it reads YMCNWCDRRSDVYATRDKFLKHVADVH. The segment at 226 to 249 adopts a C2H2-type 4 zinc-finger fold; that stretch reads FPCELCNRTFNSEIDLLQHLETRH. Residues 286–312 form a C2H2-type 3; atypical zinc finger; it reads VICDLCVSSSKVYKMPSALFSHIRFKH. 4 consecutive C2H2-type zinc fingers follow at residues 334–357, 376–399, 406–429, and 443–465; these read FVCT…NSKH, WWCH…QNKH, HPCP…SLQH, and VKCS…AVKH. Positions 463–524 are disordered; the sequence is VKHHKKDPRA…KTTEVSEVTS (62 aa). The span at 479 to 500 shows a compositional bias: low complexity; that stretch reads APTSASHVAASTSAAVPSEVEA.

As to quaternary structure, component of the REH2-associated complex (REH2C) composed of helicase REH2, associated factors H2F1 and H2F2, and mRNAs at various editing stages; the formation of the complex is RNA-independent. Within the complex, interacts with REH2; the interaction is direct. Interacts with various editing complexes including the RNA editing core (RECC) complex, the gRNA-binding (GRBC) complex (also known as the MRB1 complex) and the RNA editing mediator (REMC) complex.

It is found in the mitochondrion. Its function is as follows. Plays an important role in mitochondrial mRNA editing by promoting the assembly of the mRNA editosome. Facilitates the recruitment of mRNA to the REH2C complex and promotes the interaction between various editing complexes including REH2C, GRBC, REMC and RECC complexes. This Trypanosoma brucei brucei (strain 927/4 GUTat10.1) protein is REH2-associated factor 1.